The chain runs to 256 residues: Small ribosomal subunit protein uS2 (256 aa).

Belongs to the universal ribosomal protein uS2 family.

The polypeptide is Small ribosomal subunit protein uS2 (Ruegeria sp. (strain TM1040) (Silicibacter sp.)).